We begin with the raw amino-acid sequence, 648 residues long: Threonine--tRNA ligase (648 aa).

The TGS domain occupies 1 to 63 (MAQISLTFPD…TQDAAIAIHT (63 aa)). The interval 247-544 (DHRKLGREMN…LIEEHAGKLP (298 aa)) is catalytic. The Zn(2+) site is built by Cys-344, His-395, and His-521.

This sequence belongs to the class-II aminoacyl-tRNA synthetase family. Homodimer. Zn(2+) serves as cofactor.

It localises to the cytoplasm. The catalysed reaction is tRNA(Thr) + L-threonine + ATP = L-threonyl-tRNA(Thr) + AMP + diphosphate + H(+). In terms of biological role, catalyzes the attachment of threonine to tRNA(Thr) in a two-step reaction: L-threonine is first activated by ATP to form Thr-AMP and then transferred to the acceptor end of tRNA(Thr). Also edits incorrectly charged L-seryl-tRNA(Thr). The polypeptide is Threonine--tRNA ligase (Ruegeria sp. (strain TM1040) (Silicibacter sp.)).